We begin with the raw amino-acid sequence, 129 residues long: Probable protein cornichon homolog 2 (129 aa).

2 helical membrane passes run 45 to 65 (FIVQ…FMTL) and 105 to 125 (LAYI…SALD).

It belongs to the cornichon family.

The protein localises to the membrane. This is Probable protein cornichon homolog 2 from Arabidopsis thaliana (Mouse-ear cress).